The sequence spans 329 residues: Acetyl-coenzyme A carboxylase carboxyl transferase subunit alpha (329 aa).

In terms of domain architecture, CoA carboxyltransferase C-terminal spans 40 to 294; the sequence is QLESLASRRR…RAALERHLGE (255 aa).

It belongs to the AccA family. In terms of assembly, acetyl-CoA carboxylase is a heterohexamer composed of biotin carboxyl carrier protein (AccB), biotin carboxylase (AccC) and two subunits each of ACCase subunit alpha (AccA) and ACCase subunit beta (AccD).

The protein resides in the cytoplasm. The catalysed reaction is N(6)-carboxybiotinyl-L-lysyl-[protein] + acetyl-CoA = N(6)-biotinyl-L-lysyl-[protein] + malonyl-CoA. It participates in lipid metabolism; malonyl-CoA biosynthesis; malonyl-CoA from acetyl-CoA: step 1/1. Functionally, component of the acetyl coenzyme A carboxylase (ACC) complex. First, biotin carboxylase catalyzes the carboxylation of biotin on its carrier protein (BCCP) and then the CO(2) group is transferred by the carboxyltransferase to acetyl-CoA to form malonyl-CoA. This Synechococcus sp. (strain CC9902) protein is Acetyl-coenzyme A carboxylase carboxyl transferase subunit alpha.